Reading from the N-terminus, the 88-residue chain is Small ribosomal subunit protein bS20 (88 aa).

The segment covering Met1–Ile11 has biased composition (basic and acidic residues). 2 disordered regions span residues Met1 to Gln31 and Ser69 to Ala88.

Belongs to the bacterial ribosomal protein bS20 family.

In terms of biological role, binds directly to 16S ribosomal RNA. The sequence is that of Small ribosomal subunit protein bS20 from Leptospira interrogans serogroup Icterohaemorrhagiae serovar copenhageni (strain Fiocruz L1-130).